Consider the following 466-residue polypeptide: tRNA(Ile)-lysidine synthase (466 aa).

ATP is bound at residue 26 to 31; it reads SGGSDS.

Belongs to the tRNA(Ile)-lysidine synthase family.

The protein resides in the cytoplasm. The enzyme catalyses cytidine(34) in tRNA(Ile2) + L-lysine + ATP = lysidine(34) in tRNA(Ile2) + AMP + diphosphate + H(+). Functionally, ligates lysine onto the cytidine present at position 34 of the AUA codon-specific tRNA(Ile) that contains the anticodon CAU, in an ATP-dependent manner. Cytidine is converted to lysidine, thus changing the amino acid specificity of the tRNA from methionine to isoleucine. This chain is tRNA(Ile)-lysidine synthase, found in Oceanobacillus iheyensis (strain DSM 14371 / CIP 107618 / JCM 11309 / KCTC 3954 / HTE831).